We begin with the raw amino-acid sequence, 364 residues long: Fructose-bisphosphate aldolase B (364 aa).

Ala-2 carries the post-translational modification N-acetylalanine. Lys-13 carries the post-translational modification N6-succinyllysine. Ser-36 carries the phosphoserine modification. Thr-39 carries the post-translational modification Phosphothreonine. Arg-43 contacts beta-D-fructose 1,6-bisphosphate. Residue Thr-119 is modified to Phosphothreonine. N6-succinyllysine is present on Lys-121. Ser-132 is modified (phosphoserine). The active-site Proton acceptor is Glu-188. Residue Lys-230 is the Schiff-base intermediate with dihydroxyacetone-P of the active site. Phosphoserine occurs at positions 272, 276, 299, and 301. 272–274 (SGG) is a binding site for beta-D-fructose 1,6-bisphosphate. Beta-D-fructose 1,6-bisphosphate is bound at residue Arg-304. The residue at position 309 (Ser-309) is a Phosphoserine. Lys-317 is modified (N6-succinyllysine).

Belongs to the class I fructose-bisphosphate aldolase family. In terms of assembly, homotetramer. Interacts with BBS1, BBS2, BBS4 and BBS7. Forms a ternary complex with G6PD and TP53; this interaction is direct.

Its subcellular location is the cytoplasm. It localises to the cytosol. It is found in the cytoskeleton. The protein localises to the microtubule organizing center. The protein resides in the centrosome. Its subcellular location is the centriolar satellite. The catalysed reaction is beta-D-fructose 1,6-bisphosphate = D-glyceraldehyde 3-phosphate + dihydroxyacetone phosphate. The enzyme catalyses beta-D-fructose 1-phosphate = D-glyceraldehyde + dihydroxyacetone phosphate. It functions in the pathway carbohydrate degradation; glycolysis; D-glyceraldehyde 3-phosphate and glycerone phosphate from D-glucose: step 4/4. The protein operates within carbohydrate biosynthesis; gluconeogenesis. Its pathway is carbohydrate metabolism; fructose metabolism. Catalyzes the aldol cleavage of fructose 1,6-biphosphate to form two triosephosphates dihydroxyacetone phosphate and D-glyceraldehyde 3-phosphate in glycolysis as well as the reverse stereospecific aldol addition reaction in gluconeogenesis. In fructolysis, metabolizes fructose 1-phosphate derived from the phosphorylation of dietary fructose by fructokinase into dihydroxyacetone phosphate and D-glyceraldehyde. Acts as an adapter independently of its enzymatic activity, exerts a tumor suppressor role by stabilizing the ternary complex with G6PD and TP53 to inhibit G6PD activity and keep oxidative pentose phosphate metabolism in check. The sequence is that of Fructose-bisphosphate aldolase B (ALDOB) from Bos taurus (Bovine).